Here is a 469-residue protein sequence, read N- to C-terminus: 3-isopropylmalate dehydratase large subunit (469 aa).

3 residues coordinate [4Fe-4S] cluster: Cys-350, Cys-410, and Cys-413.

It belongs to the aconitase/IPM isomerase family. LeuC type 1 subfamily. Heterodimer of LeuC and LeuD. [4Fe-4S] cluster serves as cofactor.

It carries out the reaction (2R,3S)-3-isopropylmalate = (2S)-2-isopropylmalate. Its pathway is amino-acid biosynthesis; L-leucine biosynthesis; L-leucine from 3-methyl-2-oxobutanoate: step 2/4. Functionally, catalyzes the isomerization between 2-isopropylmalate and 3-isopropylmalate, via the formation of 2-isopropylmaleate. This chain is 3-isopropylmalate dehydratase large subunit, found in Rhodopseudomonas palustris (strain TIE-1).